The chain runs to 180 residues: UDP-4-amino-4,6-dideoxy-N-acetyl-beta-L-altrosamine N-acetyltransferase (180 aa).

In terms of domain architecture, N-acetyltransferase spans 13-169 (IDFTNLNDGE…IDVLLYYKDK (157 aa)).

The catalysed reaction is UDP-4-amino-4,6-dideoxy-N-acetyl-beta-L-altrosamine + acetyl-CoA = UDP-2,4-diacetamido-2,4,6-trideoxy-beta-L-altrose + CoA + H(+). Its function is as follows. Catalyzes the third step in the biosynthesis of pseudaminic acid, a sialic-acid-like sugar that is used to modify flagellin. Mediates N-4 acetylation of UDP-4-amino-4,6-dideoxy-beta-L-AltNAc to form UDP-2,4-diacetamido-2,4,6-trideoxy-beta-L-altropyranose. This Helicobacter pylori (strain ATCC 700392 / 26695) (Campylobacter pylori) protein is UDP-4-amino-4,6-dideoxy-N-acetyl-beta-L-altrosamine N-acetyltransferase (pseH).